A 105-amino-acid polypeptide reads, in one-letter code: Multidrug resistance protein EbrA (105 aa).

4 helical membrane passes run 2–22 (LVGY…AAML), 35–55 (ALVV…LNHI), 57–77 (LSLS…VIGV), and 84–104 (LNAK…LLNW).

It belongs to the drug/metabolite transporter (DMT) superfamily. Small multidrug resistance (SMR) (TC 2.A.7.1) family. EbrA/EbrB subfamily. In terms of assembly, the efflux pump is composed of EbrA and EbrB.

Its subcellular location is the cell membrane. In terms of biological role, part of a multidrug efflux pump. Confers resistance to cationic lipophilic dyes such as ethidium bromide, acriflavine, pyronine Y and safranin O. The efflux is probably coupled to an influx of protons. This is Multidrug resistance protein EbrA (ebrA) from Bacillus atrophaeus.